The sequence spans 419 residues: Multifunctional CCA protein (419 aa).

ATP is bound by residues Gly-8 and Arg-11. 2 residues coordinate CTP: Gly-8 and Arg-11. Asp-21 and Asp-23 together coordinate Mg(2+). 3 residues coordinate ATP: Arg-91, Arg-137, and Arg-140. CTP-binding residues include Arg-91, Arg-137, and Arg-140. In terms of domain architecture, HD spans 228 to 334; that stretch reads SFLHTMLVLQ…IKLFNKLDVW (107 aa).

Belongs to the tRNA nucleotidyltransferase/poly(A) polymerase family. Bacterial CCA-adding enzyme type 1 subfamily. Monomer. Can also form homodimers and oligomers. Requires Mg(2+) as cofactor. It depends on Ni(2+) as a cofactor.

It catalyses the reaction a tRNA precursor + 2 CTP + ATP = a tRNA with a 3' CCA end + 3 diphosphate. The catalysed reaction is a tRNA with a 3' CCA end + 2 CTP + ATP = a tRNA with a 3' CCACCA end + 3 diphosphate. Its function is as follows. Catalyzes the addition and repair of the essential 3'-terminal CCA sequence in tRNAs without using a nucleic acid template. Adds these three nucleotides in the order of C, C, and A to the tRNA nucleotide-73, using CTP and ATP as substrates and producing inorganic pyrophosphate. tRNA 3'-terminal CCA addition is required both for tRNA processing and repair. Also involved in tRNA surveillance by mediating tandem CCA addition to generate a CCACCA at the 3' terminus of unstable tRNAs. While stable tRNAs receive only 3'-terminal CCA, unstable tRNAs are marked with CCACCA and rapidly degraded. This chain is Multifunctional CCA protein, found in Mannheimia succiniciproducens (strain KCTC 0769BP / MBEL55E).